A 707-amino-acid polypeptide reads, in one-letter code: Elongation factor G (707 aa).

The tr-type G domain occupies 8-296; that stretch reads ERYRNFGIMA…AVVDFLPAPT (289 aa). GTP is bound by residues 17–24, 94–98, and 148–151; these read AHIDAGKT, DTPGH, and NKMD.

It belongs to the TRAFAC class translation factor GTPase superfamily. Classic translation factor GTPase family. EF-G/EF-2 subfamily.

Its subcellular location is the cytoplasm. Catalyzes the GTP-dependent ribosomal translocation step during translation elongation. During this step, the ribosome changes from the pre-translocational (PRE) to the post-translocational (POST) state as the newly formed A-site-bound peptidyl-tRNA and P-site-bound deacylated tRNA move to the P and E sites, respectively. Catalyzes the coordinated movement of the two tRNA molecules, the mRNA and conformational changes in the ribosome. In Paracoccus denitrificans (strain Pd 1222), this protein is Elongation factor G.